Reading from the N-terminus, the 581-residue chain is Aspartate--tRNA ligase (581 aa).

Glu-170 lines the L-aspartate pocket. The segment at 194–197 is aspartate; it reads QLFK. Arg-216 is a binding site for L-aspartate. ATP-binding positions include 216–218 and Gln-225; that span reads RDE. His-440 is a binding site for L-aspartate. Residue Glu-469 participates in ATP binding. Arg-476 contributes to the L-aspartate binding site. Residue 521–524 participates in ATP binding; the sequence is GFDR.

It belongs to the class-II aminoacyl-tRNA synthetase family. Type 1 subfamily. Homodimer.

The protein resides in the cytoplasm. The catalysed reaction is tRNA(Asp) + L-aspartate + ATP = L-aspartyl-tRNA(Asp) + AMP + diphosphate. Its function is as follows. Catalyzes the attachment of L-aspartate to tRNA(Asp) in a two-step reaction: L-aspartate is first activated by ATP to form Asp-AMP and then transferred to the acceptor end of tRNA(Asp). The sequence is that of Aspartate--tRNA ligase from Thermosipho africanus (strain TCF52B).